Consider the following 235-residue polypeptide: Thiopurine S-methyltransferase (235 aa).

Trp13, Leu48, Glu69, and Arg126 together coordinate S-adenosyl-L-methionine. A disordered region spans residues 199 to 235 (PDPQNGAPRRVEHKVYQLTGKRPASPEADGRAAETED). Over residues 226–235 (ADGRAAETED) the composition is skewed to basic and acidic residues.

It belongs to the class I-like SAM-binding methyltransferase superfamily. TPMT family.

It is found in the cytoplasm. The catalysed reaction is S-adenosyl-L-methionine + a thiopurine = S-adenosyl-L-homocysteine + a thiopurine S-methylether.. The polypeptide is Thiopurine S-methyltransferase (Stutzerimonas stutzeri (strain A1501) (Pseudomonas stutzeri)).